Consider the following 821-residue polypeptide: Glycogen phosphorylase (821 aa).

Lys667 is modified (N6-(pyridoxal phosphate)lysine).

Belongs to the glycogen phosphorylase family. The cofactor is pyridoxal 5'-phosphate.

The catalysed reaction is [(1-&gt;4)-alpha-D-glucosyl](n) + phosphate = [(1-&gt;4)-alpha-D-glucosyl](n-1) + alpha-D-glucose 1-phosphate. In terms of biological role, phosphorylase is an important allosteric enzyme in carbohydrate metabolism. Enzymes from different sources differ in their regulatory mechanisms and in their natural substrates. However, all known phosphorylases share catalytic and structural properties. The polypeptide is Glycogen phosphorylase (glgP) (Haemophilus influenzae (strain ATCC 51907 / DSM 11121 / KW20 / Rd)).